The sequence spans 877 residues: Alanine--tRNA ligase (877 aa).

The Zn(2+) site is built by His-564, His-568, Cys-666, and His-670.

Belongs to the class-II aminoacyl-tRNA synthetase family. Zn(2+) is required as a cofactor.

It localises to the cytoplasm. The catalysed reaction is tRNA(Ala) + L-alanine + ATP = L-alanyl-tRNA(Ala) + AMP + diphosphate. Functionally, catalyzes the attachment of alanine to tRNA(Ala) in a two-step reaction: alanine is first activated by ATP to form Ala-AMP and then transferred to the acceptor end of tRNA(Ala). Also edits incorrectly charged Ser-tRNA(Ala) and Gly-tRNA(Ala) via its editing domain. The polypeptide is Alanine--tRNA ligase (Pelotomaculum thermopropionicum (strain DSM 13744 / JCM 10971 / SI)).